A 290-amino-acid polypeptide reads, in one-letter code: Acetylglutamate kinase (290 aa).

Residues 65-66 (GG), Arg-87, and Asn-186 contribute to the substrate site.

The protein belongs to the acetylglutamate kinase family. ArgB subfamily.

The protein resides in the cytoplasm. The catalysed reaction is N-acetyl-L-glutamate + ATP = N-acetyl-L-glutamyl 5-phosphate + ADP. Its pathway is amino-acid biosynthesis; L-arginine biosynthesis; N(2)-acetyl-L-ornithine from L-glutamate: step 2/4. Catalyzes the ATP-dependent phosphorylation of N-acetyl-L-glutamate. The protein is Acetylglutamate kinase of Mycolicibacterium gilvum (strain PYR-GCK) (Mycobacterium gilvum (strain PYR-GCK)).